The primary structure comprises 247 residues: PF03932 family protein CutC (247 aa).

The protein belongs to the CutC family.

It is found in the cytoplasm. The sequence is that of PF03932 family protein CutC from Aliivibrio fischeri (strain MJ11) (Vibrio fischeri).